The primary structure comprises 214 residues: Thiamine-phosphate synthase (214 aa).

4-amino-2-methyl-5-(diphosphooxymethyl)pyrimidine contacts are provided by residues 37–41 (QYREK) and Asn-73. Residues Asp-74 and Asp-93 each contribute to the Mg(2+) site. Ser-112 provides a ligand contact to 4-amino-2-methyl-5-(diphosphooxymethyl)pyrimidine. 139-141 (TIS) provides a ligand contact to 2-[(2R,5Z)-2-carboxy-4-methylthiazol-5(2H)-ylidene]ethyl phosphate. Lys-142 is a 4-amino-2-methyl-5-(diphosphooxymethyl)pyrimidine binding site. 2-[(2R,5Z)-2-carboxy-4-methylthiazol-5(2H)-ylidene]ethyl phosphate-binding positions include Gly-171 and 191 to 192 (IS).

The protein belongs to the thiamine-phosphate synthase family. It depends on Mg(2+) as a cofactor.

The enzyme catalyses 2-[(2R,5Z)-2-carboxy-4-methylthiazol-5(2H)-ylidene]ethyl phosphate + 4-amino-2-methyl-5-(diphosphooxymethyl)pyrimidine + 2 H(+) = thiamine phosphate + CO2 + diphosphate. It carries out the reaction 2-(2-carboxy-4-methylthiazol-5-yl)ethyl phosphate + 4-amino-2-methyl-5-(diphosphooxymethyl)pyrimidine + 2 H(+) = thiamine phosphate + CO2 + diphosphate. The catalysed reaction is 4-methyl-5-(2-phosphooxyethyl)-thiazole + 4-amino-2-methyl-5-(diphosphooxymethyl)pyrimidine + H(+) = thiamine phosphate + diphosphate. The protein operates within cofactor biosynthesis; thiamine diphosphate biosynthesis; thiamine phosphate from 4-amino-2-methyl-5-diphosphomethylpyrimidine and 4-methyl-5-(2-phosphoethyl)-thiazole: step 1/1. Condenses 4-methyl-5-(beta-hydroxyethyl)thiazole monophosphate (THZ-P) and 2-methyl-4-amino-5-hydroxymethyl pyrimidine pyrophosphate (HMP-PP) to form thiamine monophosphate (TMP). The protein is Thiamine-phosphate synthase of Listeria innocua serovar 6a (strain ATCC BAA-680 / CLIP 11262).